The primary structure comprises 173 residues: Alpha-crystallin A chain (173 aa).

At Met1 the chain carries N-acetylmethionine. Residues 53–164 enclose the sHSP domain; sequence NFLDSSNSGM…GDRSIPVTRD (112 aa). Residues His101, Glu103, and His108 each contribute to the Zn(2+) site. A disulfide bridge links Cys132 with Cys143. Positions 143–173 are disordered; sequence CGPKSGGSESGRGDRSIPVTRDDKTNSTPSS. A compositionally biased stretch (basic and acidic residues) spans 153–167; that stretch reads GRGDRSIPVTRDDKT.

This sequence belongs to the small heat shock protein (HSP20) family. In terms of assembly, heteropolymer composed of three CRYAA and one CRYAB subunits. Inter-subunit bridging via zinc ions enhances stability, which is crucial as there is no protein turn over in the lens. Zinc coordination is achieved at least by His-101, Glu-103 and His-108. His-101 and Glu-103 come from the same molecule within the oligomer, while His-108 residue is provided by another molecule. Can also form homodimers and homotetramers (dimers of dimers) which serve as the building blocks of homooligomers. Part of a complex required for lens intermediate filament formation composed of BFSP1, BFSP2 and CRYAA.

The protein localises to the cytoplasm. It localises to the nucleus. Functionally, contributes to the transparency and refractive index of the lens. May act as a chaperone, preventing aggregation of various proteins under a wide range of stress conditions. The polypeptide is Alpha-crystallin A chain (cryaa) (Psalidodon fasciatus (Banded astyanax)).